Consider the following 323-residue polypeptide: 4-hydroxy-3-methylbut-2-enyl diphosphate reductase (323 aa).

Cys12 is a [4Fe-4S] cluster binding site. Positions 43 and 81 each coordinate (2E)-4-hydroxy-3-methylbut-2-enyl diphosphate. Residues His43 and His81 each coordinate dimethylallyl diphosphate. His43 and His81 together coordinate isopentenyl diphosphate. Cys103 is a [4Fe-4S] cluster binding site. His131 is a (2E)-4-hydroxy-3-methylbut-2-enyl diphosphate binding site. His131 is a dimethylallyl diphosphate binding site. An isopentenyl diphosphate-binding site is contributed by His131. The active-site Proton donor is Glu133. Residue Thr170 coordinates (2E)-4-hydroxy-3-methylbut-2-enyl diphosphate. Cys198 is a [4Fe-4S] cluster binding site. The (2E)-4-hydroxy-3-methylbut-2-enyl diphosphate site is built by Ser226, Asn228, and Ser271. Dimethylallyl diphosphate is bound by residues Ser226, Asn228, and Ser271. 3 residues coordinate isopentenyl diphosphate: Ser226, Asn228, and Ser271.

This sequence belongs to the IspH family. [4Fe-4S] cluster is required as a cofactor.

The catalysed reaction is isopentenyl diphosphate + 2 oxidized [2Fe-2S]-[ferredoxin] + H2O = (2E)-4-hydroxy-3-methylbut-2-enyl diphosphate + 2 reduced [2Fe-2S]-[ferredoxin] + 2 H(+). The enzyme catalyses dimethylallyl diphosphate + 2 oxidized [2Fe-2S]-[ferredoxin] + H2O = (2E)-4-hydroxy-3-methylbut-2-enyl diphosphate + 2 reduced [2Fe-2S]-[ferredoxin] + 2 H(+). The protein operates within isoprenoid biosynthesis; dimethylallyl diphosphate biosynthesis; dimethylallyl diphosphate from (2E)-4-hydroxy-3-methylbutenyl diphosphate: step 1/1. It functions in the pathway isoprenoid biosynthesis; isopentenyl diphosphate biosynthesis via DXP pathway; isopentenyl diphosphate from 1-deoxy-D-xylulose 5-phosphate: step 6/6. Its function is as follows. Catalyzes the conversion of 1-hydroxy-2-methyl-2-(E)-butenyl 4-diphosphate (HMBPP) into a mixture of isopentenyl diphosphate (IPP) and dimethylallyl diphosphate (DMAPP). Acts in the terminal step of the DOXP/MEP pathway for isoprenoid precursor biosynthesis. The chain is 4-hydroxy-3-methylbut-2-enyl diphosphate reductase from Lysinibacillus sphaericus (strain C3-41).